We begin with the raw amino-acid sequence, 697 residues long: Sodium-dependent phosphate transport protein 2B (697 aa).

The segment at 1–45 (MAPWPELENAQPNPGKFIEGASGPQSSIPAKDKEASKTNDNGTPV) is disordered. Residues 1–91 (MAPWPELENA…WSERDTKGKT (91 aa)) are Cytoplasmic-facing. A helical membrane pass occupies residues 92–112 (LCIFQGVGKFILLLGFLYLFV). Over 113–136 (CSLDVLSSAFQLVGGKVAGQFFSN) the chain is Extracellular. Residues 137-157 (NSIMSNPVAGLVIGVLVTVMV) traverse the membrane as a helical segment. Residues 158–213 (QSSSTSSSIIVSMVASSLLTVRAAIPIIMGANIGTSITNTIVALMQAGDRNEFRRA) lie on the Cytoplasmic side of the membrane. Residues 214–234 (FAGATVHDFFNWLSVFVLLPL) form a helical membrane-spanning segment. Topologically, residues 235-363 (EAATHYLEIL…FVNFSLPDLA (129 aa)) are extracellular. Residues Asn295, Asn308, Asn321, and Asn356 are each glycosylated (N-linked (GlcNAc...) asparagine). A disulfide bridge links Cys303 with Cys350. Residues 364 to 384 (VGIILLTVSLVVLCGCLIMIV) traverse the membrane as a helical segment. Over 385-408 (KLLGSVLRGQVATVIKKTLNTDFP) the chain is Cytoplasmic. Residues 409–429 (FPFAWLTGYLAILVGAGMTFI) traverse the membrane as a helical segment. Residues 430 to 486 (VQSSSVFTSAMTPLIGIGVISIERAYPLTLGSNIGTTTTAILAALASPGNTLRSSLQ) lie on the Extracellular side of the membrane. A helical membrane pass occupies residues 487–507 (IALCHFFFNISGILLWYPIPF). The Cytoplasmic portion of the chain corresponds to 508-526 (TRLPIRLAKGLGNISAKYR). A helical transmembrane segment spans residues 527 to 547 (WFAVFYLIFFFFVTPLTVFGL). At 548–551 (SLAG) the chain is on the extracellular side. Residues 552–572 (WPVLVGVGVPIILLLLLVLCL) traverse the membrane as a helical segment. Residues 573–696 (RMLQFRCPRI…SMKALSNTTV (124 aa)) are Cytoplasmic-facing.

This sequence belongs to the SLC34A transporter family. As to expression, highly abundant in the ileum of small intestine, whereas it is almost absent in the duodenum and in the jejunum.

The protein resides in the apical cell membrane. It catalyses the reaction 3 Na(+)(out) + phosphate(out) = 3 Na(+)(in) + phosphate(in). In terms of biological role, involved in actively transporting phosphate into cells via Na(+) cotransport. The polypeptide is Sodium-dependent phosphate transport protein 2B (Slc34a2) (Mus musculus (Mouse)).